The chain runs to 243 residues: Tyrosine-protein phosphatase CpsB (243 aa).

The protein belongs to the metallo-dependent hydrolases superfamily. CpsB/CapC family. The cofactor is Mn(2+).

The enzyme catalyses O-phospho-L-tyrosyl-[protein] + H2O = L-tyrosyl-[protein] + phosphate. The protein operates within capsule biogenesis; capsule polysaccharide biosynthesis. Dephosphorylates CpsD. Involved in the regulation of capsular polysaccharide biosynthesis. The protein is Tyrosine-protein phosphatase CpsB (cpsB) of Streptococcus pneumoniae serotype 4 (strain ATCC BAA-334 / TIGR4).